The sequence spans 408 residues: Dual-specificity RNA methyltransferase RlmN (408 aa).

Glutamate 126 serves as the catalytic Proton acceptor. In terms of domain architecture, Radical SAM core spans glutamate 132 to arginine 373. Cysteine 139 and cysteine 384 are oxidised to a cystine. Residues cysteine 146, cysteine 150, and cysteine 153 each contribute to the [4Fe-4S] cluster site. S-adenosyl-L-methionine-binding positions include glycine 210–glutamate 211, serine 242, serine 264–histidine 266, and asparagine 341. The S-methylcysteine intermediate role is filled by cysteine 384.

Belongs to the radical SAM superfamily. RlmN family. [4Fe-4S] cluster is required as a cofactor.

It is found in the cytoplasm. The catalysed reaction is adenosine(2503) in 23S rRNA + 2 reduced [2Fe-2S]-[ferredoxin] + 2 S-adenosyl-L-methionine = 2-methyladenosine(2503) in 23S rRNA + 5'-deoxyadenosine + L-methionine + 2 oxidized [2Fe-2S]-[ferredoxin] + S-adenosyl-L-homocysteine. It carries out the reaction adenosine(37) in tRNA + 2 reduced [2Fe-2S]-[ferredoxin] + 2 S-adenosyl-L-methionine = 2-methyladenosine(37) in tRNA + 5'-deoxyadenosine + L-methionine + 2 oxidized [2Fe-2S]-[ferredoxin] + S-adenosyl-L-homocysteine. In terms of biological role, specifically methylates position 2 of adenine 2503 in 23S rRNA and position 2 of adenine 37 in tRNAs. m2A2503 modification seems to play a crucial role in the proofreading step occurring at the peptidyl transferase center and thus would serve to optimize ribosomal fidelity. In Bartonella henselae (strain ATCC 49882 / DSM 28221 / CCUG 30454 / Houston 1) (Rochalimaea henselae), this protein is Dual-specificity RNA methyltransferase RlmN.